Reading from the N-terminus, the 243-residue chain is PF03932 family protein CutC (243 aa).

It belongs to the CutC family.

Its subcellular location is the cytoplasm. The protein is PF03932 family protein CutC of Histophilus somni (strain 2336) (Haemophilus somnus).